A 129-amino-acid polypeptide reads, in one-letter code: Large ribosomal subunit protein uL22 (129 aa).

Belongs to the universal ribosomal protein uL22 family. As to quaternary structure, part of the 50S ribosomal subunit.

Its function is as follows. This protein binds specifically to 23S rRNA; its binding is stimulated by other ribosomal proteins, e.g. L4, L17, and L20. It is important during the early stages of 50S assembly. It makes multiple contacts with different domains of the 23S rRNA in the assembled 50S subunit and ribosome. In terms of biological role, the globular domain of the protein is located near the polypeptide exit tunnel on the outside of the subunit, while an extended beta-hairpin is found that lines the wall of the exit tunnel in the center of the 70S ribosome. The polypeptide is Large ribosomal subunit protein uL22 (Prochlorococcus marinus (strain MIT 9211)).